The following is a 134-amino-acid chain: Putative pre-16S rRNA nuclease (134 aa).

It belongs to the YqgF nuclease family.

It localises to the cytoplasm. In terms of biological role, could be a nuclease involved in processing of the 5'-end of pre-16S rRNA. The protein is Putative pre-16S rRNA nuclease of Helicobacter pylori (strain J99 / ATCC 700824) (Campylobacter pylori J99).